The sequence spans 369 residues: Adenosine 3'-phospho 5'-phosphosulfate transporter 2 (369 aa).

N-linked (GlcNAc...) asparagine glycosylation is present at Asn39. The next 6 membrane-spanning stretches (helical) occupy residues 46 to 66 (LTQF…YGYL), 79 to 99 (YGWY…LIEL), 115 to 135 (MLIA…LGYL), 138 to 158 (PTQV…GVFI), 168 to 188 (VSAA…DSTI), and 191 to 211 (NFNL…AVIG). Residue Asn222 is glycosylated (N-linked (GlcNAc...) asparagine). Transmembrane regions (helical) follow at residues 235 to 255 (IGFV…PAVA), 266 to 285 (GYAF…VLAL), 292 to 314 (LLAV…LFFA), and 317 to 337 (FTFQ…LNVY).

This sequence belongs to the nucleotide-sugar transporter family. SLC35B subfamily.

It is found in the golgi apparatus membrane. The enzyme catalyses 3'-phosphoadenylyl sulfate(in) + adenosine 3',5'-bisphosphate(out) = 3'-phosphoadenylyl sulfate(out) + adenosine 3',5'-bisphosphate(in). In terms of biological role, probably functions as a 3'-phosphoadenylyl sulfate:adenosine 3',5'-bisphosphate antiporter at the Golgi membranes. Mediates the transport from the cytosol into the lumen of the Golgi of 3'-phosphoadenylyl sulfate/adenosine 3'-phospho 5'-phosphosulfate (PAPS), a universal sulfuryl donor for sulfation events that take place in that compartment. The protein is Adenosine 3'-phospho 5'-phosphosulfate transporter 2 of Mus musculus (Mouse).